The following is a 538-amino-acid chain: tRNA-2-methylthio-N(6)-dimethylallyladenosine synthase (538 aa).

Positions Met-1–Ser-23 are disordered. An MTTase N-terminal domain is found at Lys-95–Phe-213. [4Fe-4S] cluster is bound by residues Cys-104, Cys-140, Cys-174, Cys-250, Cys-254, and Cys-257. One can recognise a Radical SAM core domain in the interval Arg-236–Gln-466. Residues Leu-469 to Glu-532 enclose the TRAM domain.

The protein belongs to the methylthiotransferase family. MiaB subfamily. As to quaternary structure, monomer. [4Fe-4S] cluster is required as a cofactor.

Its subcellular location is the cytoplasm. It carries out the reaction N(6)-dimethylallyladenosine(37) in tRNA + (sulfur carrier)-SH + AH2 + 2 S-adenosyl-L-methionine = 2-methylsulfanyl-N(6)-dimethylallyladenosine(37) in tRNA + (sulfur carrier)-H + 5'-deoxyadenosine + L-methionine + A + S-adenosyl-L-homocysteine + 2 H(+). Functionally, catalyzes the methylthiolation of N6-(dimethylallyl)adenosine (i(6)A), leading to the formation of 2-methylthio-N6-(dimethylallyl)adenosine (ms(2)i(6)A) at position 37 in tRNAs that read codons beginning with uridine. This is tRNA-2-methylthio-N(6)-dimethylallyladenosine synthase from Halalkalibacterium halodurans (strain ATCC BAA-125 / DSM 18197 / FERM 7344 / JCM 9153 / C-125) (Bacillus halodurans).